Reading from the N-terminus, the 386-residue chain is L-lactate dehydrogenase (386 aa).

One can recognise an FMN hydroxy acid dehydrogenase domain in the interval methionine 1–arginine 380. Tyrosine 24 is a binding site for substrate. 2 residues coordinate FMN: serine 106 and glutamine 127. Residue tyrosine 129 coordinates substrate. Threonine 155 is a binding site for FMN. Substrate is bound at residue arginine 164. Residue lysine 251 participates in FMN binding. The active-site Proton acceptor is the histidine 275. Arginine 278 contributes to the substrate binding site. An FMN-binding site is contributed by aspartate 306–arginine 330.

The protein belongs to the FMN-dependent alpha-hydroxy acid dehydrogenase family. FMN is required as a cofactor.

The protein localises to the cell inner membrane. The enzyme catalyses (S)-lactate + A = pyruvate + AH2. Catalyzes the conversion of L-lactate to pyruvate. Is coupled to the respiratory chain. In Xanthomonas campestris pv. campestris (strain 8004), this protein is L-lactate dehydrogenase.